We begin with the raw amino-acid sequence, 112 residues long: Small ribosomal subunit protein eS24 (112 aa).

The tract at residues 88 to 112 (RGMAGEEEGNADAQDAPSGDAAEAS) is disordered.

Belongs to the eukaryotic ribosomal protein eS24 family.

The protein is Small ribosomal subunit protein eS24 of Methanospirillum hungatei JF-1 (strain ATCC 27890 / DSM 864 / NBRC 100397 / JF-1).